The following is a 248-amino-acid chain: tRNA (guanine-N(1)-)-methyltransferase (248 aa).

S-adenosyl-L-methionine is bound by residues Gly-113 and 133 to 138 (IGDYVL).

The protein belongs to the RNA methyltransferase TrmD family. Homodimer.

Its subcellular location is the cytoplasm. The enzyme catalyses guanosine(37) in tRNA + S-adenosyl-L-methionine = N(1)-methylguanosine(37) in tRNA + S-adenosyl-L-homocysteine + H(+). In terms of biological role, specifically methylates guanosine-37 in various tRNAs. The protein is tRNA (guanine-N(1)-)-methyltransferase of Shewanella woodyi (strain ATCC 51908 / MS32).